The chain runs to 147 residues: Hemoglobin subunit deltaH (147 aa).

The region spanning 3–147 is the Globin domain; the sequence is RLTDSEKAEV…MANALAHKYH (145 aa). Positions 64 and 93 each coordinate heme b.

Belongs to the globin family. Heterotetramer of two delta chains and two alpha chains. Red blood cells.

This Dendrohyrax dorsalis (Beecroft's tree hyrax) protein is Hemoglobin subunit deltaH (HBD).